The primary structure comprises 251 residues: tRNA (guanine-N(7)-)-methyltransferase (251 aa).

Residues 1–43 form a disordered region; the sequence is MQPNEQPGTGPADTTLEQQDTAAAEVGHPRRIRSFVRRAGRTS. The span at 29–40 shows a compositional bias: basic residues; sequence PRRIRSFVRRAG. Residues Glu-82, Glu-107, Asp-134, and Asp-157 each coordinate S-adenosyl-L-methionine. Asp-157 is an active-site residue. Substrate is bound at residue Lys-161. The interaction with RNA stretch occupies residues 163–168; that stretch reads RHNKRR. Substrate-binding positions include Asp-193 and 228-231; that span reads TKFE.

The protein belongs to the class I-like SAM-binding methyltransferase superfamily. TrmB family.

The catalysed reaction is guanosine(46) in tRNA + S-adenosyl-L-methionine = N(7)-methylguanosine(46) in tRNA + S-adenosyl-L-homocysteine. It functions in the pathway tRNA modification; N(7)-methylguanine-tRNA biosynthesis. Functionally, catalyzes the formation of N(7)-methylguanine at position 46 (m7G46) in tRNA. The chain is tRNA (guanine-N(7)-)-methyltransferase from Ralstonia nicotianae (strain ATCC BAA-1114 / GMI1000) (Ralstonia solanacearum).